We begin with the raw amino-acid sequence, 187 residues long: Elongation factor P (187 aa).

Belongs to the elongation factor P family.

It localises to the cytoplasm. It functions in the pathway protein biosynthesis; polypeptide chain elongation. Involved in peptide bond synthesis. Stimulates efficient translation and peptide-bond synthesis on native or reconstituted 70S ribosomes in vitro. Probably functions indirectly by altering the affinity of the ribosome for aminoacyl-tRNA, thus increasing their reactivity as acceptors for peptidyl transferase. This is Elongation factor P from Pseudarthrobacter chlorophenolicus (strain ATCC 700700 / DSM 12829 / CIP 107037 / JCM 12360 / KCTC 9906 / NCIMB 13794 / A6) (Arthrobacter chlorophenolicus).